The chain runs to 1172 residues: DNA-directed RNA polymerases IV and V subunit 2 (1172 aa).

Asp-786 serves as a coordination point for Mg(2+). Residues Cys-1108, Cys-1111, Cys-1133, and Cys-1136 each coordinate Zn(2+). Residues 1108-1136 (CRKCKTYANVIERTPSSGRKIRGPYCRVC) form a C4-type zinc finger.

The protein belongs to the RNA polymerase beta chain family. Component of the RNA polymerase IV and V complexes. Interacts with SSH1, NRPD1 and NRPE1. In terms of tissue distribution, mostly expressed in seedlings, flowers and roots, present ubiquitously, except in sperm cells.

It localises to the nucleus. It carries out the reaction RNA(n) + a ribonucleoside 5'-triphosphate = RNA(n+1) + diphosphate. Functionally, DNA-dependent RNA polymerase catalyzes the transcription of DNA into RNA using the four ribonucleoside triphosphates as substrates. Second largest component of RNA polymerases IV and V which mediate short-interfering RNAs (siRNA) accumulation and subsequent RNA-directed DNA methylation-dependent (RdDM) transcriptional gene silencing (TGS) of endogenous repeated sequences, including transposable elements. Proposed to contribute to the polymerase catalytic activity and forms the polymerase active center together with the largest subunit. Also required for full erasure of methylation when the RNA trigger is withdrawn. Required for intercellular RNA interference (RNAi) leading to systemic post-transcriptional gene silencing. Involved in the maintenance of post-transcriptional RNA silencing. During interphase, mediates siRNA-independent heterochromatin association and methylation into chromocenters and condensation and cytosine methylation at pericentromeric major repeats. Required for complete maintenance of the 35S promoter homology-dependent TGS in transgenic plants and for the initial establishment of DNA methylation. The sequence is that of DNA-directed RNA polymerases IV and V subunit 2 (NRPD2) from Arabidopsis thaliana (Mouse-ear cress).